The primary structure comprises 325 residues: Fructose-1,6-bisphosphatase class 1 (325 aa).

Residues E84, D103, L105, and D106 each coordinate Mg(2+). Substrate is bound by residues 106–109 (DGSS), N196, and K262. Position 268 (E268) interacts with Mg(2+).

Belongs to the FBPase class 1 family. Homotetramer. Requires Mg(2+) as cofactor.

It is found in the cytoplasm. The enzyme catalyses beta-D-fructose 1,6-bisphosphate + H2O = beta-D-fructose 6-phosphate + phosphate. The protein operates within carbohydrate biosynthesis; gluconeogenesis. This chain is Fructose-1,6-bisphosphatase class 1, found in Shewanella oneidensis (strain ATCC 700550 / JCM 31522 / CIP 106686 / LMG 19005 / NCIMB 14063 / MR-1).